Reading from the N-terminus, the 201-residue chain is MASVDLAKVGTILVKNALSGEMVELKSLWKEKTTVLLFLRRFGCQICRWIAKDIGKLKASCDAHQIRLVGIGPEEVGLKEFLEGNFFNGELYIDESKESYKTLGFKRYSALSVIPAALGKKVRDIVTKANADGVQGNFSGDLLQSGGMLIVSKGGEKVLLHFIQDSPGDYVPLESIVQTLGITANVTESQRPQCNDEVCTR.

The protein belongs to the peroxiredoxin-like PRXL2 family. Prostamide/prostaglandin F synthase subfamily.

It localises to the cytoplasm. Its subcellular location is the cytosol. It carries out the reaction prostaglandin H2 + [thioredoxin]-dithiol = prostaglandin F2alpha + [thioredoxin]-disulfide. The enzyme catalyses prostamide F2alpha + [thioredoxin]-disulfide = prostamide H2 + [thioredoxin]-dithiol. Catalyzes the reduction of prostaglandin-ethanolamide H(2) (prostamide H(2)) to prostamide F(2alpha) with NADPH as proton donor. Also able to reduce prostaglandin H(2) to prostaglandin F(2alpha). This chain is Prostamide/prostaglandin F synthase (prxl2b), found in Xenopus tropicalis (Western clawed frog).